A 156-amino-acid polypeptide reads, in one-letter code: 6,7-dimethyl-8-ribityllumazine synthase (156 aa).

5-amino-6-(D-ribitylamino)uracil-binding positions include Phe-22, Ala-56–Glu-58, and Val-80–Ile-82. Ser-85–Thr-86 is a binding site for (2S)-2-hydroxy-3-oxobutyl phosphate. The Proton donor role is filled by His-88. Phe-113 is a 5-amino-6-(D-ribitylamino)uracil binding site. Arg-127 provides a ligand contact to (2S)-2-hydroxy-3-oxobutyl phosphate.

The protein belongs to the DMRL synthase family.

It catalyses the reaction (2S)-2-hydroxy-3-oxobutyl phosphate + 5-amino-6-(D-ribitylamino)uracil = 6,7-dimethyl-8-(1-D-ribityl)lumazine + phosphate + 2 H2O + H(+). It functions in the pathway cofactor biosynthesis; riboflavin biosynthesis; riboflavin from 2-hydroxy-3-oxobutyl phosphate and 5-amino-6-(D-ribitylamino)uracil: step 1/2. Functionally, catalyzes the formation of 6,7-dimethyl-8-ribityllumazine by condensation of 5-amino-6-(D-ribitylamino)uracil with 3,4-dihydroxy-2-butanone 4-phosphate. This is the penultimate step in the biosynthesis of riboflavin. This is 6,7-dimethyl-8-ribityllumazine synthase from Streptococcus agalactiae serotype Ia (strain ATCC 27591 / A909 / CDC SS700).